A 570-amino-acid polypeptide reads, in one-letter code: MSYRMSRAAYANMFGPTVGDKVRLADTELFIEVEKDFTTHGEEVKFGGGKVIRDGMGQSQVTREGGAVDTVITNALILDHWGIVKADIGLKDGRIAAIGKAGNPDMQPGVTIIVGPGTEVIAGEGKIVTAGGMDSHIHFICPQQIEEALMSGLTCMLGGGTGPAHGTLATTCTPGPWHIARMIEAADAFPMNLAFAGKGNASLPGALVEMVLGGATSLKLHEDWGTTPAAIDCCLSVADEYDVQVMIHTDTLNESGFVEDTIAAIKGRTIHAYHTEGAGGGHAPDIIRICGQPNVIPSSTNPTRPYTVNTLAEHLDMLMVCHHLSPTIPEDIAFAESRIRKETIAAEDILHDIGAFSIISSDSQAMGRVGEVAIRTWQTADKMKRQRGRLKEETGDNDNFRVKRYIAKYTINPAIAHGLSHEIGSLEVGKRADLVLWNPAFFGVKPDMVLLGGTIAAAPMGDPNASIPTPQPVHYRPMFGAYGRSRTNSSVTFVSQASLDAGLAGRLGVAKELVAVQNTRGGIGKASMIHNSLTPHIEVDPETYEVRADGELLTCEPATVLPMAQRYFLF.

Residues 131-570 (GGMDSHIHFI…LPMAQRYFLF (440 aa)) form the Urease domain. Positions 136, 138, and 219 each coordinate Ni(2+). K219 bears the N6-carboxylysine mark. H221 is a substrate binding site. Positions 248 and 274 each coordinate Ni(2+). The active-site Proton donor is the H322. D362 lines the Ni(2+) pocket.

This sequence belongs to the metallo-dependent hydrolases superfamily. Urease alpha subunit family. In terms of assembly, heterotrimer of UreA (gamma), UreB (beta) and UreC (alpha) subunits. Three heterotrimers associate to form the active enzyme. Ni cation is required as a cofactor. In terms of processing, carboxylation allows a single lysine to coordinate two nickel ions.

It is found in the cytoplasm. The catalysed reaction is urea + 2 H2O + H(+) = hydrogencarbonate + 2 NH4(+). The protein operates within nitrogen metabolism; urea degradation; CO(2) and NH(3) from urea (urease route): step 1/1. The sequence is that of Urease subunit alpha from Rhizobium meliloti (strain 1021) (Ensifer meliloti).